A 293-amino-acid polypeptide reads, in one-letter code: 4-hydroxy-tetrahydrodipicolinate synthase (293 aa).

Pyruvate is bound at residue Thr45. Tyr133 functions as the Proton donor/acceptor in the catalytic mechanism. Lys162 acts as the Schiff-base intermediate with substrate in catalysis. Ile204 provides a ligand contact to pyruvate.

This sequence belongs to the DapA family. In terms of assembly, homotetramer; dimer of dimers.

It is found in the cytoplasm. It catalyses the reaction L-aspartate 4-semialdehyde + pyruvate = (2S,4S)-4-hydroxy-2,3,4,5-tetrahydrodipicolinate + H2O + H(+). Its pathway is amino-acid biosynthesis; L-lysine biosynthesis via DAP pathway; (S)-tetrahydrodipicolinate from L-aspartate: step 3/4. Catalyzes the condensation of (S)-aspartate-beta-semialdehyde [(S)-ASA] and pyruvate to 4-hydroxy-tetrahydrodipicolinate (HTPA). In Brucella suis biovar 1 (strain 1330), this protein is 4-hydroxy-tetrahydrodipicolinate synthase.